A 342-amino-acid chain; its full sequence is DNA primase small subunit PriS (342 aa).

Catalysis depends on residues D97, D99, and D236.

Belongs to the eukaryotic-type primase small subunit family. In terms of assembly, heterodimer of a small subunit (PriS) and a large subunit (PriL). It depends on Mg(2+) as a cofactor. Mn(2+) is required as a cofactor.

Catalytic subunit of DNA primase, an RNA polymerase that catalyzes the synthesis of short RNA molecules used as primers for DNA polymerase during DNA replication. The small subunit contains the primase catalytic core and has DNA synthesis activity on its own. Binding to the large subunit stabilizes and modulates the activity, increasing the rate of DNA synthesis while decreasing the length of the DNA fragments, and conferring RNA synthesis capability. The DNA polymerase activity may enable DNA primase to also catalyze primer extension after primer synthesis. May also play a role in DNA repair. This is DNA primase small subunit PriS from Aeropyrum pernix (strain ATCC 700893 / DSM 11879 / JCM 9820 / NBRC 100138 / K1).